A 72-amino-acid polypeptide reads, in one-letter code: MSLSIIDQLEEKIKQAVETIQLLQLEVEELKEKNNNLTQERDGLRQEHEQLKVEQQNFQERLRSLLGQIDNV.

The stretch at 3–71 (LSIIDQLEEK…LRSLLGQIDN (69 aa)) forms a coiled coil.

Belongs to the ZapB family. Homodimer. The ends of the coiled-coil dimer bind to each other, forming polymers. Interacts with FtsZ.

The protein resides in the cytoplasm. Non-essential, abundant cell division factor that is required for proper Z-ring formation. It is recruited early to the divisome by direct interaction with FtsZ, stimulating Z-ring assembly and thereby promoting cell division earlier in the cell cycle. Its recruitment to the Z-ring requires functional FtsA or ZipA. This chain is Cell division protein ZapB, found in Haemophilus ducreyi (strain 35000HP / ATCC 700724).